We begin with the raw amino-acid sequence, 484 residues long: Putative cysteine ligase BshC (484 aa).

The stretch at 372 to 435 (RAFRDRVEGL…AARDEVLARH (64 aa)) forms a coiled coil.

Belongs to the BshC family.

In Thermus thermophilus (strain ATCC BAA-163 / DSM 7039 / HB27), this protein is Putative cysteine ligase BshC.